Here is a 609-residue protein sequence, read N- to C-terminus: Frizzled and smoothened-like protein E (609 aa).

An N-terminal signal peptide occupies residues 1–20; sequence MEMIRIFLIYLILKIIIING. At 21–259 the chain is on the extracellular side; it reads ENNEYSKGYG…QWKRVYDMAK (239 aa). One can recognise an FZ domain in the interval 35 to 192; sequence FPGSKCLNYV…GLYKVPCIDP (158 aa). 4 cysteine pairs are disulfide-bonded: Cys40/Cys118, Cys53/Cys111, Cys100/Cys149, and Cys138/Cys189. N-linked (GlcNAc...) asparagine glycans are attached at residues Asn75, Asn130, Asn172, Asn198, Asn217, and Asn245. The chain crosses the membrane as a helical span at residues 260–280; the sequence is TLSSISFICACYNILTFGILN. At 281–288 the chain is on the cytoplasmic side; that stretch reads RKRKSKYN. Residues 289–309 form a helical membrane-spanning segment; sequence ICITLMSTSIALVYLTDIIKF. Residues 310-337 lie on the Extracellular side of the membrane; the sequence is GYGIEEFLCPEPGRSAVQNDAACGITGA. The chain crosses the membrane as a helical span at residues 338-358; the sequence is MFHFGITYCCCWAMTMSIVLF. Over 359–365 the chain is Cytoplasmic; the sequence is CSVKRIK. The chain crosses the membrane as a helical span at residues 366–386; that stretch reads LFYFRHFMIGNTIFTIITTVI. The Extracellular segment spans residues 387-408; it reads LLSAKKMVAGTGYIECWVRERW. Residues 409-429 traverse the membrane as a helical segment; the sequence is FVITLFWLPCGIGLSIGIFCI. Topologically, residues 430-457 are cytoplasmic; the sequence is GGVIHEIYNISKKVNIRESEFILRQIKP. The helical transmembrane segment at 458–478 threads the bilayer; it reads FSLVFSVAGSFLYLFIFFFDV. Topologically, residues 479-511 are extracellular; that stretch reads ERKIDSYKAAVADYVLCLLSGGSEETCFTTGPN. Residues 512–532 form a helical membrane-spanning segment; the sequence is YASFFIFYFFIRVFGVLFFSI. The Cytoplasmic segment spans residues 533–609; the sequence is YGTSRVARDI…DSKSIELEKK (77 aa). Over residues 559–570 the composition is skewed to polar residues; it reads ESGISRNNSRTD. The disordered stretch occupies residues 559–609; that stretch reads ESGISRNNSRTDISFGKNNNSKNSNNSKNSNNSKNSNNSDNDSKSIELEKK. Positions 575-598 are enriched in low complexity; sequence KNNNSKNSNNSKNSNNSKNSNNSD. Residues 599-609 show a composition bias toward basic and acidic residues; sequence NDSKSIELEKK.

The protein belongs to the G-protein coupled receptor Fz/Smo family.

The protein localises to the membrane. This chain is Frizzled and smoothened-like protein E (fslE), found in Dictyostelium discoideum (Social amoeba).